We begin with the raw amino-acid sequence, 342 residues long: Cytosolic Fe-S cluster assembly factor NBP35 (342 aa).

A disordered region spans residues 1–45 (MGPSLETPEPVEDVLANPLKQKPQLVAPEPEHCPGPESEQAGTAD). [4Fe-4S] cluster is bound by residues C33, C47, C50, and C56. 86–93 (GKGGVGKS) serves as a coordination point for ATP. 2 residues coordinate [4Fe-4S] cluster: C259 and C262.

Belongs to the Mrp/NBP35 ATP-binding proteins family. NUBP1/NBP35 subfamily. As to quaternary structure, heterotetramer of 2 NBP35 and 2 CFD1 chains. [4Fe-4S] cluster serves as cofactor.

It is found in the cytoplasm. Functionally, component of the cytosolic iron-sulfur (Fe/S) protein assembly (CIA) machinery. Required for maturation of extramitochondrial Fe-S proteins. The NBP35-CFD1 heterotetramer forms a Fe-S scaffold complex, mediating the de novo assembly of an Fe-S cluster and its transfer to target apoproteins. This Chaetomium globosum (strain ATCC 6205 / CBS 148.51 / DSM 1962 / NBRC 6347 / NRRL 1970) (Soil fungus) protein is Cytosolic Fe-S cluster assembly factor NBP35.